A 576-amino-acid chain; its full sequence is Acyl-CoA ligase sidI (576 aa).

Residues proline 3 to proline 11 carry the PTS2-type peroxisomal targeting signal motif. ATP-binding residues include aspartate 439, arginine 454, and lysine 553.

It belongs to the ATP-dependent AMP-binding enzyme family.

It localises to the peroxisome. It functions in the pathway siderophore biosynthesis. Functionally, acyl-CoA ligase; part of the gene cluster that mediates the biosynthesis of at least 11 siderophores, including beauverichelin A, dimerumic acid (DA), Na-dimethyl coprogen (NADC), eleutherazine B, ferricrocin (FC), fusarinine A, fusarinine C (FsC), metachelin A, mevalonolactone, rhodotorulic acid (RA) and tenellin. This cocktail of siderophores for iron metabolism is essential for virulence, and more specifically for the fungal virulence in penetrating through the host cuticle. Siderophore synthesis is also involved in conidial germination under iron-deficient conditions. For biosynthesis of fusarinine C, the transacylase SIDF transfers anhydromevalonyl to N(5)-hydroxyornithine. The required anhydromevalonyl-CoA moiety is derived from mevalonate by CoA ligation and dehydration catalyzed by SIDI and sidH respectively. This is Acyl-CoA ligase sidI from Beauveria bassiana (strain ARSEF 2860) (White muscardine disease fungus).